The following is a 147-amino-acid chain: Deoxyuridine 5'-triphosphate nucleotidohydrolase (147 aa).

Substrate-binding positions include 67–69 (RSG), Asn80, and 84–86 (TID).

The protein belongs to the dUTPase family. Mg(2+) is required as a cofactor.

It catalyses the reaction dUTP + H2O = dUMP + diphosphate + H(+). It participates in pyrimidine metabolism; dUMP biosynthesis; dUMP from dCTP (dUTP route): step 2/2. Functionally, this enzyme is involved in nucleotide metabolism: it produces dUMP, the immediate precursor of thymidine nucleotides and it decreases the intracellular concentration of dUTP so that uracil cannot be incorporated into DNA. The sequence is that of Deoxyuridine 5'-triphosphate nucleotidohydrolase from Anaeromyxobacter sp. (strain Fw109-5).